The sequence spans 156 residues: E3 ubiquitin-protein ligase RNF181 (156 aa).

Residues C79–R120 form an RING-type; atypical zinc finger. The disordered stretch occupies residues K135–T156.

This sequence belongs to the RNF181 family.

The catalysed reaction is S-ubiquitinyl-[E2 ubiquitin-conjugating enzyme]-L-cysteine + [acceptor protein]-L-lysine = [E2 ubiquitin-conjugating enzyme]-L-cysteine + N(6)-ubiquitinyl-[acceptor protein]-L-lysine.. It functions in the pathway protein modification; protein ubiquitination. Functionally, E3 ubiquitin-protein ligase which accepts ubiquitin from an E2 ubiquitin-conjugating enzyme in the form of a thioester and then directly transfers the ubiquitin to targeted substrates. Catalyzes monoubiquitination of 26S proteasome subunit PSMC2/RPT1. In Danio rerio (Zebrafish), this protein is E3 ubiquitin-protein ligase RNF181 (rnf181).